Reading from the N-terminus, the 507-residue chain is MEELQGYLEMDGFRQQYFLYPFLFQEYIYALAHGHALNGSILYEPVENLDHDNKSSSLIVKRLITRMHQQNRLIISVNDSNQNRFVGHNNHFDSQMISEGFAVVVEIPFSLRLVSSLEEKEIAKSHNLRSIHSIFPFFEDKLSHLNHVSDILIPHPIHLEILVQTLHSWIQDTPSLHLLRLSLYEYWNSNSLITSKNSISLFSKENQRFFLFLSNSHVYECEFIFIFLRKQPFHLRSKSFGSFLERTHFYAKIEYLVVVLCNDFQKTLGLFKDPFMHYVRYQGKSILASRGAHLLIKKWKSHLVNFWQCHFDLWSQPARIHIKQLYNHPFYFLGYLSSVRLNSSVIRSQMLENSFRIDTAIKKFETVVPIIPLIGSLAKAKFCNVSGHPISKPFRADLSDSEILNRFGRICRNLSHYHSGSSKKQSLYRIKYILRLSCARTLSRKHKSTIRAFLKRLGSEFLEEFFTEEEQALSLIFPTTSSPSHRSHRERIWYLDIIRINDLVSHL.

Belongs to the intron maturase 2 family. MatK subfamily.

The protein resides in the plastid. It is found in the chloroplast. In terms of biological role, usually encoded in the trnK tRNA gene intron. Probably assists in splicing its own and other chloroplast group II introns. The chain is Maturase K from Persea americana (Avocado).